Consider the following 303-residue polypeptide: Porphobilinogen deaminase (303 aa).

Cys-241 carries the S-(dipyrrolylmethanemethyl)cysteine modification.

It belongs to the HMBS family. As to quaternary structure, monomer. It depends on dipyrromethane as a cofactor.

The enzyme catalyses 4 porphobilinogen + H2O = hydroxymethylbilane + 4 NH4(+). It participates in porphyrin-containing compound metabolism; protoporphyrin-IX biosynthesis; coproporphyrinogen-III from 5-aminolevulinate: step 2/4. It functions in the pathway porphyrin-containing compound metabolism; chlorophyll biosynthesis. In terms of biological role, tetrapolymerization of the monopyrrole PBG into the hydroxymethylbilane pre-uroporphyrinogen in several discrete steps. This is Porphobilinogen deaminase from Roseiflexus sp. (strain RS-1).